The following is a 465-amino-acid chain: Putative ABC transporter ATP-binding protein MG065 homolog (465 aa).

Residues 232 to 465 form the ABC transporter domain; it reads IELKNVYKYI…PKQVEDINWI (234 aa). Residue 268–275 participates in ATP binding; that stretch reads GPSGSGKT.

This sequence belongs to the ABC transporter superfamily.

The polypeptide is Putative ABC transporter ATP-binding protein MG065 homolog (Mycoplasma pneumoniae (strain ATCC 29342 / M129 / Subtype 1) (Mycoplasmoides pneumoniae)).